A 355-amino-acid polypeptide reads, in one-letter code: MPAARPAGAGVGLVDRYGRRATDMRLSLTDKCNLRCTYCMPAEGLEWLSKQAVMSASEIVRIVGIGVGRLGVRELRLTGGEPLVRHDLVDIIAELRRNHPELPISMTTNGVGLAKKVAPLKAAGLTRINVSLDSLHEETFTKLTRRPFLDQVLAGVDAAWAAGLGPVKLNAVLMRGINDAEAPSLLAWAVERGYELRFIEQMPLDADHGWTRRNMITAAEIRDLLSTDFVLTPDPRARDGAPAERFEVRRRVAGSGAGLGPVLGTVGIIASVTEPFCSDCRRTRITAEGRIMSCLFSREEFDLLVLLRSGASDDDLARRWQDAMWLKPKAHGMDHVGLDAPDFVQPDRSMSAIGG.

The Radical SAM core domain maps to Arg16–Pro242. Residue Arg25 participates in GTP binding. Positions 32 and 36 each coordinate [4Fe-4S] cluster. Tyr38 contacts S-adenosyl-L-methionine. Cys39 lines the [4Fe-4S] cluster pocket. A GTP-binding site is contributed by Arg76. S-adenosyl-L-methionine is bound at residue Gly80. Residue Thr107 coordinates GTP. Ser131 is an S-adenosyl-L-methionine binding site. A GTP-binding site is contributed by Lys168. Met202 is an S-adenosyl-L-methionine binding site. The [4Fe-4S] cluster site is built by Cys277 and Cys280. Position 282-284 (Arg282–Arg284) interacts with GTP. Cys294 contacts [4Fe-4S] cluster.

This sequence belongs to the radical SAM superfamily. MoaA family. In terms of assembly, monomer. Requires [4Fe-4S] cluster as cofactor.

It carries out the reaction GTP + AH2 + S-adenosyl-L-methionine = (8S)-3',8-cyclo-7,8-dihydroguanosine 5'-triphosphate + 5'-deoxyadenosine + L-methionine + A + H(+). The protein operates within cofactor biosynthesis; molybdopterin biosynthesis. In terms of biological role, catalyzes, together with MoaC, the conversion of 5'-GTP to cyclic pyranopterin monophosphate (cPMP or molybdopterin precursor Z). Its function is as follows. Catalyzes the cyclization of GTP to (8S)-3',8-cyclo-7,8-dihydroguanosine 5'-triphosphate. The protein is GTP 3',8-cyclase of Paenarthrobacter nicotinovorans (Arthrobacter nicotinovorans).